The chain runs to 366 residues: uncharacterized protein (366 aa).

To B.subtilis XkdV.

This is an uncharacterized protein from Bacillus subtilis (strain 168).